Consider the following 355-residue polypeptide: Probable butyrate kinase (355 aa).

The protein belongs to the acetokinase family.

It localises to the cytoplasm. It carries out the reaction butanoate + ATP = butanoyl phosphate + ADP. This chain is Probable butyrate kinase, found in Clostridium botulinum (strain Alaska E43 / Type E3).